A 52-amino-acid polypeptide reads, in one-letter code: Large ribosomal subunit protein bL32c (52 aa).

It belongs to the bacterial ribosomal protein bL32 family.

Its subcellular location is the plastid. The protein resides in the chloroplast. In Nymphaea alba (White water-lily), this protein is Large ribosomal subunit protein bL32c.